We begin with the raw amino-acid sequence, 481 residues long: Glutamyl-tRNA(Gln) amidotransferase subunit A (481 aa).

Active-site charge relay system residues include Lys76 and Ser151. Catalysis depends on Ser175, which acts as the Acyl-ester intermediate.

This sequence belongs to the amidase family. GatA subfamily. As to quaternary structure, heterotrimer of A, B and C subunits.

The catalysed reaction is L-glutamyl-tRNA(Gln) + L-glutamine + ATP + H2O = L-glutaminyl-tRNA(Gln) + L-glutamate + ADP + phosphate + H(+). Allows the formation of correctly charged Gln-tRNA(Gln) through the transamidation of misacylated Glu-tRNA(Gln) in organisms which lack glutaminyl-tRNA synthetase. The reaction takes place in the presence of glutamine and ATP through an activated gamma-phospho-Glu-tRNA(Gln). The polypeptide is Glutamyl-tRNA(Gln) amidotransferase subunit A (Neisseria gonorrhoeae (strain NCCP11945)).